The following is a 310-amino-acid chain: p-hydroxybenzoic acid efflux pump subunit AaeA (310 aa).

A helical transmembrane segment spans residues 12–32; it reads VITLLLVIIAIVLIFRIWVFY.

Belongs to the membrane fusion protein (MFP) (TC 8.A.1) family.

The protein localises to the cell inner membrane. In terms of biological role, forms an efflux pump with AaeB. This is p-hydroxybenzoic acid efflux pump subunit AaeA from Erwinia tasmaniensis (strain DSM 17950 / CFBP 7177 / CIP 109463 / NCPPB 4357 / Et1/99).